An 823-amino-acid polypeptide reads, in one-letter code: Lon protease (823 aa).

The Lon N-terminal domain occupies 22–217 (LPLLPVRDVV…KVNEHLNKEH (196 aa)). 369 to 376 (GPPGVGKT) is an ATP binding site. In terms of domain architecture, Lon proteolytic spans 605 to 786 (KNEVGIVTGL…DDVLAVALET (182 aa)). Catalysis depends on residues S692 and K735. A disordered region spans residues 788 to 823 (PPPPPASEGKPAATVKAPPRRGIAAPRKGAMAGAKS).

It belongs to the peptidase S16 family. Homohexamer. Organized in a ring with a central cavity.

The protein localises to the cytoplasm. The catalysed reaction is Hydrolysis of proteins in presence of ATP.. In terms of biological role, ATP-dependent serine protease that mediates the selective degradation of mutant and abnormal proteins as well as certain short-lived regulatory proteins. Required for cellular homeostasis and for survival from DNA damage and developmental changes induced by stress. Degrades polypeptides processively to yield small peptide fragments that are 5 to 10 amino acids long. Binds to DNA in a double-stranded, site-specific manner. The sequence is that of Lon protease from Geobacter metallireducens (strain ATCC 53774 / DSM 7210 / GS-15).